A 308-amino-acid chain; its full sequence is Ribosomal protein L11 methyltransferase (308 aa).

Positions 157, 178, 200, and 243 each coordinate S-adenosyl-L-methionine.

It belongs to the methyltransferase superfamily. PrmA family.

It localises to the cytoplasm. It carries out the reaction L-lysyl-[protein] + 3 S-adenosyl-L-methionine = N(6),N(6),N(6)-trimethyl-L-lysyl-[protein] + 3 S-adenosyl-L-homocysteine + 3 H(+). Its function is as follows. Methylates ribosomal protein L11. The polypeptide is Ribosomal protein L11 methyltransferase (Desulforamulus reducens (strain ATCC BAA-1160 / DSM 100696 / MI-1) (Desulfotomaculum reducens)).